The following is a 108-amino-acid chain: uncharacterized protein (108 aa).

The disordered stretch occupies residues Glu-56 to His-108. The segment covering Gly-73–Gln-89 has biased composition (polar residues).

This is an uncharacterized protein from Homo sapiens (Human).